A 684-amino-acid polypeptide reads, in one-letter code: MSEVNEMSGGSIGGELLRASPKVLTAGDRKLLKVELRPGDTTYVSWKKLMRDAGKVNGLSASVPDPPPNANPNLEFRIAPGHPVEIETNEQPHSNRFNAVIEKIERLYKGNDSSDGEELDGAPDDDEYDTEDSFIDDAELDEYFEVDNSTVKHDGFYVNRGKLERMEPSTTSNQQPKKRRRKDSAKPCRDAVDVSDKHTKLSITARKKDQSTAPGSWKTQESPLPSGAQDANTSVPLDDVKHSDRANHQSRNDTSHKSRETGSSSALHQKYSNKSLHQQSTSLLGKSPPNVFAEVTVVRQKENNGMHQLANVTGSRQSSQASKKDGSNVKSKTSILEKAIRELEKVVVESRPPAITENQEADTSSQAVKRRLPRDVKLKLAKVARIAQASQGKHSTELINRLMSIVGHLIQLRSLKRNLKIMIDMGDSATREKDTRFKQINNEVLDMIKAKVSLMESQAIKPEGATSDDFQDSVEKPSLKKFVMDAALEDKLCDLYDIFIDGLDEDQGPQTKKLYVNLAELWPNRLMDYRGIKHAIFRAKERRKALYGNLAKEMDQTKMKKSMKQLVPRTDCTAQPNTELVVQRQHSGEKKLIVDPNATSTSVVTSQTMVDRSNQQQPEKLKGISSSCNPTEETRVVKRKNEAVMAEKQVVLALKKPEHPQTRVIPAPQNLNIPRTTPDLNLPS.

Disordered stretches follow at residues 108–137 (YKGN…FIDD), 157–287 (YVNR…LGKS), 311–332 (NVTG…VKSK), 609–631 (MVDR…CNPT), and 660–684 (PQTR…NLPS). The span at 114–137 (SDGEELDGAPDDDEYDTEDSFIDD) shows a compositional bias: acidic residues. 2 stretches are compositionally biased toward basic and acidic residues: residues 157-167 (YVNRGKLERME) and 184-199 (SAKP…DKHT). Residues 211–235 (STAPGSWKTQESPLPSGAQDANTSV) show a composition bias toward polar residues. Residues 238–260 (DDVKHSDRANHQSRNDTSHKSRE) show a composition bias toward basic and acidic residues. 4 stretches are compositionally biased toward polar residues: residues 261–284 (TGSS…TSLL), 311–321 (NVTGSRQSSQA), 611–631 (DRSN…CNPT), and 669–684 (QNLN…NLPS).

Belongs to the ubinuclein family. As to quaternary structure, component of the HIRA complex made of UBN1, UBN2, ASF1A, CABIN1 and HIRA. Interacts with HIRA.

It localises to the nucleus. The protein resides in the nucleolus. Functionally, may be required for replication-independent chromatin assembly. In Arabidopsis thaliana (Mouse-ear cress), this protein is Ubinuclein-1.